The sequence spans 170 residues: Cathelicidin antimicrobial peptide (170 aa).

The signal sequence occupies residues 1 to 30; it reads MKTQMDGHSLGRWSLVLLLLGLVMPLAIVA. Residues 31 to 131 constitute a propeptide, cathelin-like domain (CLD); it reads QVLSYKEAVL…DISCDKDNRR (101 aa). 2 disulfide bridges follow: Cys-86/Cys-97 and Cys-108/Cys-125. The segment at 150–162 is active core; that stretch reads FKRIVQRIKDFLR.

This sequence belongs to the cathelicidin family. As to quaternary structure, monomer, homodimer or homotrimer (in vitro). Oligomerizes as tetra- or hexamer in solution (in vitro). In terms of processing, proteolytically cleaved by proteinase PRTN3 into antibacterial peptide LL-37. Proteolytically cleaved by cathepsin CTSG and neutrophil elastase ELANE. Resistant to proteolytic degradation in solution, and when bound to both zwitterionic (mimicking mammalian membranes) and negatively charged membranes (mimicking bacterial membranes). Post-translationally, after secretion onto the skin surface, the CAMP gene product is processed by a serine protease-dependent mechanism into multiple novel antimicrobial peptides distinct from and shorter than cathelicidin LL-37. These peptides show enhanced antimicrobial action, acquiring the ability to kill skin pathogens such as S.aureus, E.coli and C.albicans. These peptides have lost the ability to stimulate CXCL8/IL8 release from keratinocytes. The peptides act synergistically, killing bacteria at lower concentrations when present together, and maintain activity at increased salt condition.

Its subcellular location is the secreted. It is found in the vesicle. Functionally, antimicrobial protein that is an integral component of the innate immune system. Binds to bacterial lipopolysaccharides (LPS). Acts via neutrophil N-formyl peptide receptors to enhance the release of CXCL2. Postsecretory processing generates multiple cathelicidin antimicrobial peptides with various lengths which act as a topical antimicrobial defense in sweat on skin. The unprocessed precursor form, cathelicidin antimicrobial peptide, inhibits the growth of Gram-negative E.coli and E.aerogenes with efficiencies comparable to that of the mature peptide LL-37 (in vitro). In terms of biological role, antimicrobial peptide that is an integral component of the innate immune system. Binds to bacterial lipopolysaccharides (LPS). Causes membrane permeabilization by forming transmembrane pores (in vitro). Causes lysis of E.coli. Exhibits antimicrobial activity against Gram-negative bacteria such as P.aeruginosa, S.typhimurium, E.aerogenes, E.coli and P.syringae, Gram-positive bacteria such as L.monocytogenes, S.epidermidis, S.pyogenes and S.aureus, as well as vancomycin-resistant enterococci (in vitro). Exhibits antimicrobial activity against methicillin-resistant S.aureus, P.mirabilis, and C.albicans in low-salt media, but not in media containing 100 mM NaCl (in vitro). Forms chiral supramolecular assemblies with quinolone signal (PQS) molecules of P.aeruginosa, which may lead to interference of bacterial quorum signaling and perturbance of bacterial biofilm formation. May form supramolecular fiber-like assemblies on bacterial membranes. Induces cytokine and chemokine producation as well as TNF/TNFA and CSF2/GMCSF production in normal human keratinocytes. Exhibits hemolytic activity against red blood cells. Exhibits antimicrobial activity against E.coli and B.megaterium (in vitro). In Pongo pygmaeus (Bornean orangutan), this protein is Cathelicidin antimicrobial peptide.